Here is an 856-residue protein sequence, read N- to C-terminus: Protein phosphatase 2C 32 (856 aa).

Phosphoserine is present on residues Ser-152, Ser-189, and Ser-201. In terms of domain architecture, PPM-type phosphatase spans 269–835 (ESCLESNRNL…DDVSVMVVSL (567 aa)). Positions 307 and 308 each coordinate Mn(2+). Disordered regions lie at residues 340 to 373 (PSED…KSVV), 388 to 407 (GNTD…GPGK), and 446 to 485 (NPST…QISS). A compositionally biased stretch (low complexity) spans 395–407 (ADGPPGDSAGPGK). Positions 471–485 (NSGQRHGTKKSQISS) are enriched in polar residues. Residues Asp-763 and Asp-826 each contribute to the Mn(2+) site.

It belongs to the PP2C family. It depends on Mg(2+) as a cofactor. Requires Mn(2+) as cofactor. Expressed in roots, leaves, stems, inflorescences, flowers and throughout the shoot meristem.

The protein resides in the nucleus. The catalysed reaction is O-phospho-L-seryl-[protein] + H2O = L-seryl-[protein] + phosphate. It carries out the reaction O-phospho-L-threonyl-[protein] + H2O = L-threonyl-[protein] + phosphate. Insensitive to okadaic acid. Its function is as follows. Involved in the regulation of pedicel length and of CLAVATA pathways controlling stem cell identity at shoot and flower meristems. The polypeptide is Protein phosphatase 2C 32 (POL) (Arabidopsis thaliana (Mouse-ear cress)).